Reading from the N-terminus, the 108-residue chain is Ig kappa chain V-V region HP R16.7 (108 aa).

The framework-1 stretch occupies residues 1–23; it reads DIQMTQTTSSLSASLGDRVTISC. Cys23 and Cys88 are disulfide-bonded. The tract at residues 24-34 is complementarity-determining-1; it reads RASQDISNYLN. The framework-2 stretch occupies residues 35-49; it reads WYQQKPDGTVKLLIY. Residues 50 to 56 are complementarity-determining-2; that stretch reads YTSRLHS. The interval 57 to 88 is framework-3; sequence GVPSRFSGSGSGTDYSLTISNLEQEDIATYFC. The segment at 89–97 is complementarity-determining-3; it reads QQGNSLPRT. Residues 98–108 are framework-4; sequence FGGGTKLEIKR.

This chain is Ig kappa chain V-V region HP R16.7, found in Mus musculus (Mouse).